Consider the following 182-residue polypeptide: Large ribosomal subunit protein uL16 (182 aa).

Belongs to the universal ribosomal protein uL16 family.

This Thermococcus onnurineus (strain NA1) protein is Large ribosomal subunit protein uL16.